The primary structure comprises 75 residues: MAGLLQVRDALALRATSGAQLSQSLATPLPLVQAMLDRLTAMGKVERIEQDDGACLSGGCKSCPQPRGAARCSTG.

Positions 55, 60, 63, and 72 each coordinate iron-sulfur cluster.

The protein belongs to the FeoC family.

In terms of biological role, may function as a transcriptional regulator that controls feoABC expression. This chain is Probable [Fe-S]-dependent transcriptional repressor, found in Serratia marcescens.